The following is a 374-amino-acid chain: Probable dual-specificity RNA methyltransferase RlmN 3 (374 aa).

Glu-96 (proton acceptor) is an active-site residue. The Radical SAM core domain occupies 110 to 350; sequence DHSRKTICIS…VTLRREKGHD (241 aa). A disulfide bond links Cys-117 and Cys-355. [4Fe-4S] cluster is bound by residues Cys-124, Cys-128, and Cys-131. S-adenosyl-L-methionine is bound by residues 181–182, Ser-213, 236–238, and Asn-312; these read GE and SLH. Cys-355 functions as the S-methylcysteine intermediate in the catalytic mechanism.

This sequence belongs to the radical SAM superfamily. RlmN family. [4Fe-4S] cluster serves as cofactor.

Its subcellular location is the cytoplasm. The enzyme catalyses adenosine(2503) in 23S rRNA + 2 reduced [2Fe-2S]-[ferredoxin] + 2 S-adenosyl-L-methionine = 2-methyladenosine(2503) in 23S rRNA + 5'-deoxyadenosine + L-methionine + 2 oxidized [2Fe-2S]-[ferredoxin] + S-adenosyl-L-homocysteine. It catalyses the reaction adenosine(37) in tRNA + 2 reduced [2Fe-2S]-[ferredoxin] + 2 S-adenosyl-L-methionine = 2-methyladenosine(37) in tRNA + 5'-deoxyadenosine + L-methionine + 2 oxidized [2Fe-2S]-[ferredoxin] + S-adenosyl-L-homocysteine. Its function is as follows. Specifically methylates position 2 of adenine 2503 in 23S rRNA and position 2 of adenine 37 in tRNAs. The chain is Probable dual-specificity RNA methyltransferase RlmN 3 from Opitutus terrae (strain DSM 11246 / JCM 15787 / PB90-1).